A 583-amino-acid polypeptide reads, in one-letter code: Vivapain-1 (583 aa).

The Cytoplasmic portion of the chain corresponds to 1 to 34 (MAQDIKIMNLTKSSLEALNRNQMLSKKSSRKILK). The propeptide at 1-338 (MAQDIKIMNL…SSSGANLLAD (338 aa)) is activation peptide. The helical; Signal-anchor for type II membrane protein transmembrane segment at 35 to 55 (ICMYAILTFAMCGVVLICLTA) threads the bilayer. Residues 56-583 (MSNSDGSLTQ…IGVEVFYPIL (528 aa)) are Lumenal-facing. The segment covering 62–82 (SLTQSGSHNQSGSLKGLSSTP) has biased composition (polar residues). Disordered stretches follow at residues 62–83 (SLTQ…STPG) and 104–125 (PHGN…ALPN). An N-linked (GlcNAc...) asparagine glycan is attached at Asn70. Residues 106–119 (GNRDPTGDDVEKPA) are compositionally biased toward basic and acidic residues. N-linked (GlcNAc...) asparagine glycans are attached at residues Asn195 and Asn272. 3 disulfide bridges follow: Cys360/Cys402, Cys395/Cys435, and Cys420/Cys440. Residue Cys363 is part of the active site. Asn381 carries an N-linked (GlcNAc...) asparagine glycan. Asn486 and Asn494 each carry an N-linked (GlcNAc...) asparagine glycan. Residues Cys489 and Cys572 are joined by a disulfide bond. Residues His495 and Asn547 contribute to the active site.

Belongs to the peptidase C1 family.

The protein localises to the membrane. In terms of biological role, cysteine protease. The protein is Vivapain-1 of Plasmodium vivax (strain Salvador I).